The following is an 840-amino-acid chain: Transient receptor potential cation channel subfamily V member 1 (840 aa).

The segment covering 1–12 (MKNWGSSDSGGS) has biased composition (low complexity). The disordered stretch occupies residues 1-43 (MKNWGSSDSGGSEDPPQEDSCLDPLDGDPNSRPVPAKPHIFPT). Over 1–433 (MKNWGSSDSG…QDKWDRFVKR (433 aa)) the chain is Cytoplasmic. ANK repeat units lie at residues 111-139 (KLYD…FLQK) and 154-186 (TGKT…QTDS). ATP contacts are provided by residues R116, K156, K161, N165, 200–203 (YKGQ), and 211–212 (ER). 4 ANK repeats span residues 204–229 (TALH…ADVQ), 250–277 (ELPL…QPAD), 286–322 (NTVL…KLHP), and 336–359 (TPLA…REIQ). Phosphothreonine; by PKA; in vitro is present on T371. One copy of the ANK 7 repeat lies at 394 to 416 (NSVLEVIAYSSSETPNRHDMLLV). The chain crosses the membrane as a helical span at residues 434 to 455 (IFYFNFFIYCLYMIIFTTAAYY). Over 456-473 (RPVDGLPPYKLKHTVGDY) the chain is Extracellular. A helical membrane pass occupies residues 474 to 498 (FRVTGEILSVLGGVYFFFRGIQYFL). The Cytoplasmic portion of the chain corresponds to 499-511 (QRRPSLKTLFVDS). S503 is subject to Phosphoserine; by PKC/PRKCE. Residue 512–513 (YS) participates in resiniferatoxin binding. The helical transmembrane segment at 512–533 (YSEMLFFVQSLFMLGTVVLYFC) threads the bilayer. Residues 534 to 536 (HHK) lie on the Extracellular side of the membrane. The helical transmembrane segment at 537 to 557 (EYVASMVFSLAMGWTNMLYYT) threads the bilayer. Residues T551 and R558 each coordinate resiniferatoxin. The Cytoplasmic segment spans residues 558–560 (RGF). The chain crosses the membrane as a helical span at residues 561-599 (QQMGIYAVMIEKMILRDLCRFMFVYLVFLFGFSTAVVTL). Topologically, residues 600–631 (IEDGKNNSVPTESTLHRWRGPGCRPPDSSYNS) are extracellular. The N-linked (GlcNAc...) asparagine glycan is linked to N605. Residues 632-653 (LYSTCLELFKFTIGMGDLEFTE) constitute an intramembrane region (pore-forming). Residue G645 coordinates Na(+). Residues 645 to 648 (GMGD) carry the Selectivity filter motif. D648 serves as a coordination point for Ca(2+). Over 654 to 657 (NYDF) the chain is Extracellular. The helical transmembrane segment at 658–684 (KAVFIILLLAYVILTYILLLNMLIALM) threads the bilayer. Topologically, residues 685–840 (GETVNKIAQE…FKDPVGLGEK (156 aa)) are cytoplasmic. The tract at residues 686-714 (ETVNKIAQESKNIWKLQRAITILDTEKSF) is AD. Position 706 is a phosphothreonine (T706). The interaction with calmodulin stretch occupies residues 769–803 (EGIKRTLSFSLRSGRVSGRNWKNFSLVPLLRDAST). The residue at position 776 (S776) is a Phosphoserine. The segment at 779-794 (LRSGRVSGRNWKNFSL) is required for PIP2-mediated channel inhibition. A Phosphoserine; by PKC/PRKCE and PKC/PRKCZ modification is found at S802. S822 carries the post-translational modification Phosphoserine.

It belongs to the transient receptor (TC 1.A.4) family. TrpV subfamily. TRPV1 sub-subfamily. In terms of assembly, homotetramer. Interacts with PIRT. May also form a heteromeric channel with TRPV3. Interacts with CALM, PRKCM and CSK. Interacts with PRKCG and NTRK1, probably by forming a trimeric complex. Interacts with the Scolopendra mutilans RhTx toxin. Interacts with TMEM100. Interacts with PACS2. Post-translationally, phosphorylation by PKA reverses capsaicin-induced dephosphorylation at multiple sites. Phosphorylation by CAMKII seems to regulate binding to vanilloids. Phosphorylated and modulated by PRKCE, PRKCM and probably PRKCZ. Dephosphorylation by calcineurin seems to lead to receptor desensitization and phosphorylation by CAMKII recovers activity.

Its subcellular location is the postsynaptic cell membrane. It localises to the cell projection. It is found in the dendritic spine membrane. The protein localises to the cell membrane. It carries out the reaction Ca(2+)(in) = Ca(2+)(out). The catalysed reaction is Mg(2+)(in) = Mg(2+)(out). It catalyses the reaction Na(+)(in) = Na(+)(out). The enzyme catalyses K(+)(in) = K(+)(out). With respect to regulation, channel activity is activated via the interaction with PIRT and phosphatidylinositol 4,5-bisphosphate (PIP2). Both PIRT and PIP2 are required to activate channel activity. The channel is sensitized by ATP binding. Repeated stimulation with capsaicin gives rise to progressively smaller responses, due to desensitization. This desensitization is triggered by the influx of calcium ions and is inhibited by elevated ATP levels. Ca(2+) and CALM displace ATP from its binding site and trigger a conformation change that leads to a closed, desensitized channel. Intracellular PIP2 inhibits desensitization. The double-knot toxin (DkTx) from the Chinese earth tiger tarantula activates the channel and traps it in an open conformation. The Scolopendra mutilans RhTx toxin potentiates the heat activation pathway mediated by this channel by binding to the charge-rich outer pore region (in an activated state). Functionally, non-selective calcium permeant cation channel involved in detection of noxious chemical and thermal stimuli. Seems to mediate proton influx and may be involved in intracellular acidosis in nociceptive neurons. Involved in mediation of inflammatory pain and hyperalgesia. Sensitized by a phosphatidylinositol second messenger system activated by receptor tyrosine kinases, which involves PKC isozymes and PCL. Activated by vanilloids, like capsaicin, and temperatures higher than 42 degrees Celsius. Upon activation, exhibits a time- and Ca(2+)-dependent outward rectification, followed by a long-lasting refractory state. Mild extracellular acidic pH (6.5) potentiates channel activation by noxious heat and vanilloids, whereas acidic conditions (pH &lt;6) directly activate the channel. Can be activated by endogenous compounds, including 12-hydroperoxytetraenoic acid and bradykinin. Acts as ionotropic endocannabinoid receptor with central neuromodulatory effects. Triggers a form of long-term depression (TRPV1-LTD) mediated by the endocannabinoid anandamine in the hippocampus and nucleus accumbens by affecting AMPA receptors endocytosis. This Canis lupus familiaris (Dog) protein is Transient receptor potential cation channel subfamily V member 1 (TRPV1).